The chain runs to 283 residues: Shikimate kinase (283 aa).

An ATP-binding site is contributed by 86–96 (PIKSGLSSSSA).

This sequence belongs to the GHMP kinase family. Archaeal shikimate kinase subfamily.

The protein localises to the cytoplasm. It carries out the reaction shikimate + ATP = 3-phosphoshikimate + ADP + H(+). The protein operates within metabolic intermediate biosynthesis; chorismate biosynthesis; chorismate from D-erythrose 4-phosphate and phosphoenolpyruvate: step 5/7. In Methanococcus maripaludis (strain C6 / ATCC BAA-1332), this protein is Shikimate kinase.